Reading from the N-terminus, the 214-residue chain is MKLLILTCLVAVALARPKHPINHRGLSPEVPNENLLRFVVAPFPEVFRKENINELSKDIGSESTEDQAMEDAKQMKAGSSSSSEEIVPNSAEQKYIQKEDVPSERYLGYLEQLLRLKKYNVPQLEIVPKSAEEQLHSMKEGNPAHQKQPMIAVNQELAYFYPQLFRQFYQLDAYPSGAWYYLPLGTQYTDAPSFSDIPNPIGSENSGKTTMPLW.

The N-terminal stretch at Met-1 to Ala-15 is a signal peptide. The disordered stretch occupies residues Ile-59 to Ala-91. Phosphoserine is present on residues Ser-61, Ser-63, Ser-79, Ser-80, Ser-81, Ser-82, Ser-83, Ser-90, and Ser-130.

This sequence belongs to the alpha-casein family. As to expression, mammary gland specific. Secreted in milk.

It is found in the secreted. Important role in the capacity of milk to transport calcium phosphate. This chain is Alpha-S1-casein (CSN1S1), found in Capra hircus (Goat).